The following is a 396-amino-acid chain: Cell adhesion molecule 3 (396 aa).

An N-terminal signal peptide occupies residues 1–22 (MGAPSALPLLLLLACSWAPGGA). The 102-residue stretch at 23 to 124 (NLSQDDSQPW…VRTAKSLVTV (102 aa)) folds into the Ig-like V-type domain. Over 23-328 (NLSQDDSQPW…PVPSSSSTYH (306 aa)) the chain is Extracellular. Intrachain disulfides connect Cys48–Cys108, Cys150–Cys207, and Cys252–Cys297. 2 consecutive Ig-like C2-type domains span residues 128-226 (PQKP…QRIE) and 231-313 (PTAM…FTLN). N-linked (GlcNAc...) asparagine glycosylation occurs at Asn288. A helical transmembrane segment spans residues 329-349 (AIIGGIVAFIVFLLLILLIFL). Residues 350 to 396 (GHYLIRHKGTYLTHEAKGSDDAPDADTAIINAEGGQSGGDDKKEYFI) are Cytoplasmic-facing. The interval 365 to 396 (AKGSDDAPDADTAIINAEGGQSGGDDKKEYFI) is disordered. Ser386 bears the Phosphoserine mark.

It belongs to the nectin family. Homodimer. Can form trans-heterodimers with NECTIN3. Interacts with EPB41L1, DLG3, PALS2 and CASK. As to expression, mainly expressed in brain, in neuronal cell bodies of cerebellum, cortex, hippocampus, hypothalamus and spinal cord. In spinal cord predominantly expressed in motor neurons. Expressed in axons, presynaptic nerve terminals, glia cell processes.

Its subcellular location is the cell membrane. It is found in the cell junction. Involved in cell-cell adhesion. Has both calcium-independent homophilic cell-cell adhesion activity and calcium-independent heterophilic cell-cell adhesion activity with IGSF4, NECTIN1 and NECTIN3. Interaction with EPB41L1 may regulate structure or function of cell-cell junctions. The chain is Cell adhesion molecule 3 (Cadm3) from Mus musculus (Mouse).